The primary structure comprises 668 residues: Golgin subfamily A member 6-like protein 1 (668 aa).

Disordered regions lie at residues 1–120 (MLMW…HQEA), 323–356 (IREQ…RQEE), 384–466 (EKMH…EMWR), 481–591 (KEKM…REQE), and 603–639 (EQEE…MRRQ). Residues 15-41 (LPTHPHLPTHPHLPTHPHLPTHPHLPT) show a composition bias toward basic residues. Residues 51 to 72 (MSKETRQSKLAEAKEQLTDHHP) are compositionally biased toward basic and acidic residues. Composition is skewed to polar residues over residues 73-83 (QTNPSVGTAAS) and 91-103 (NNGT…TSGG). A compositionally biased stretch (basic and acidic residues) spans 106-120 (SPEDEQKASHQHQEA). Residues 177–663 (LEQALSAVAT…EEKMQEHQEH (487 aa)) are a coiled coil.

Belongs to the GOLGA6 family.

The chain is Golgin subfamily A member 6-like protein 1 (GOLGA6L1) from Homo sapiens (Human).